The following is a 763-amino-acid chain: MAAMLMQPWPPFLPHLTLVFLTLILFFPNQSFSQSDSPRNIETFFPNDTITPPVQSPVLSPPQNPSSSSSDSDRGNILRAVLITAASTLLVAAVFFFLVHKCRRRRNRVGGVDNTLQPPVPPLAEAALAREGFTRFGGNVKGLILDENGLDVLYWRKLQQSQRDNKGGSFRKEIIHGDDEEKNVIYSKSKKKSGPVTETPLLRGRSSTSHSVIHNDNYRNATTTHPPHVKTDSFEFVKPDPTPPPPPPPPIPVKQSATPPPPPPPKLKNNGPSPPPPPPLKKTAALSSSASKKPPPAPRGSSSGESSNGQVKLKPLHWDKVNPDSDHSMVWDKIDRGSFSFDGDLMEALFGYVAVGKKSPDDGGDKKPSSASPAQIFILDPRKSQNTAIVLKSLGMTRDELVESLMEGHDFHPDTLERLSRIAPTKEEQSAILQFDGDTKMLADAESFLFHLLKAVPCAFTRLNALLFRANYYPEISNHNKNLQTLDLACTELRSRGLFVKLLEAILKSGNRMNAGTARGDAQAFNLTALLKLSDVKSVDGKTTLLNFVVEEVVRSEGKRCVLNRRTNRSFSRSSSSSISEVISKEEQEKEYLRLGLPVVGGLSSEFTNVKKAAAVDYDTVAATCLALTSRAKDARRVLAQSEGDNKEGVRFVKKMNEFLDSVEEEVKLAKEEEKKVLELVKRTTEYYQAGAVKGKNPLHLFVIVRDFLAMVDKVCVEIARNLQRRSSMGSTQQRNAVKFPVLPPNFMSDRSRSDSGGSDSDM.

The N-terminal stretch at 1–33 is a signal peptide; sequence MAAMLMQPWPPFLPHLTLVFLTLILFFPNQSFS. The disordered stretch occupies residues 52-73; sequence PPVQSPVLSPPQNPSSSSSDSD. The helical transmembrane segment at 80-100 threads the bilayer; sequence AVLITAASTLLVAAVFFFLVH. 2 disordered regions span residues 185–327 and 726–763; these read IYSK…DSDH and RSSMGSTQQRNAVKFPVLPPNFMSDRSRSDSGGSDSDM. A compositionally biased stretch (polar residues) spans 205-225; it reads RSSTSHSVIHNDNYRNATTTH. Residues 229–238 are compositionally biased toward basic and acidic residues; sequence VKTDSFEFVK. Positions 240–280 are enriched in pro residues; the sequence is DPTPPPPPPPPIPVKQSATPPPPPPPKLKNNGPSPPPPPPL. The span at 281 to 292 shows a compositional bias: low complexity; that stretch reads KKTAALSSSASK. In terms of domain architecture, FH2 spans 303-738; the sequence is SGESSNGQVK…MGSTQQRNAV (436 aa). Residues 316–327 are compositionally biased toward basic and acidic residues; that stretch reads LHWDKVNPDSDH. The segment covering 726–736 has biased composition (polar residues); it reads RSSMGSTQQRN.

This sequence belongs to the formin-like family. Class-I subfamily. As to quaternary structure, interacts with profilin. As to expression, expressed in the whole plant (at protein level).

It localises to the cell membrane. Its function is as follows. Might be involved in the organization and polarity of the actin cytoskeleton. This chain is Formin-like protein 4 (FH4), found in Arabidopsis thaliana (Mouse-ear cress).